Here is a 433-residue protein sequence, read N- to C-terminus: uncharacterized protein (433 aa).

Residues 258 to 304 (KNIKSKLLLELRQLKNNITNLQNKITKTMDNVKKIIEEIEQSKNKVT) are a coiled coil.

Belongs to the mimivirus R160 family.

The protein localises to the virion. This is an uncharacterized protein from Acanthamoeba polyphaga mimivirus (APMV).